We begin with the raw amino-acid sequence, 356 residues long: S-adenosylmethionine:tRNA ribosyltransferase-isomerase (356 aa).

It belongs to the QueA family. As to quaternary structure, monomer.

It is found in the cytoplasm. The catalysed reaction is 7-aminomethyl-7-carbaguanosine(34) in tRNA + S-adenosyl-L-methionine = epoxyqueuosine(34) in tRNA + adenine + L-methionine + 2 H(+). Its pathway is tRNA modification; tRNA-queuosine biosynthesis. In terms of biological role, transfers and isomerizes the ribose moiety from AdoMet to the 7-aminomethyl group of 7-deazaguanine (preQ1-tRNA) to give epoxyqueuosine (oQ-tRNA). In Cronobacter sakazakii (strain ATCC BAA-894) (Enterobacter sakazakii), this protein is S-adenosylmethionine:tRNA ribosyltransferase-isomerase.